The chain runs to 213 residues: MKGRFLVLEGIDGCGKTTQLRQLAEWLPDSGLMPEGATLHLTREPGGTPLGRALRELLLHPPDEAAPCPEAELLMYAADRAQHVQRRILPALACGDWVLSDRFSGSTLAYQGDGRGLDRALILDLERIATAGLVPDVTLWLDLSLEASMARREERTEDRIEAEGQAFLARVADGFRQLAAERGWVGIPAALSPKEVHQAIRLALEGHAALRRR.

10-17 (GIDGCGKT) is an ATP binding site.

The protein belongs to the thymidylate kinase family.

It carries out the reaction dTMP + ATP = dTDP + ADP. In terms of biological role, phosphorylation of dTMP to form dTDP in both de novo and salvage pathways of dTTP synthesis. The protein is Thymidylate kinase of Synechococcus sp. (strain WH7803).